The primary structure comprises 206 residues: VEL1-related protein SCY_5430 (206 aa).

Positions 1-19 (MSFLNIFTFFSVLVSVATA) are cleaved as a signal peptide.

It belongs to the VEL1 family.

Its subcellular location is the cytoplasm. It localises to the cytosol. This chain is VEL1-related protein SCY_5430, found in Saccharomyces cerevisiae (strain YJM789) (Baker's yeast).